Reading from the N-terminus, the 566-residue chain is SRSF protein kinase 3 (566 aa).

Residues 1–13 (MSASTGGGGGGDS) show a composition bias toward gly residues. Residues 1 to 60 (MSASTGGGGGGDSGSSSSSSSQASCGPEPSGSELAPPTPAPRMLQGLLGSDDEEQEDPKD) are disordered. Low complexity predominate over residues 14–26 (GSSSSSSSQASCG). At serine 50 the chain carries Phosphoserine. The Protein kinase domain occupies 79-564 (YHVVRKLGWG…AADCLQHPWL (486 aa)). Residues 85-93 (LGWGHFSTV) and lysine 108 contribute to the ATP site. Aspartate 212 (proton acceptor) is an active-site residue. Residues 236 to 254 (EWQQSGAPPPSRSTVSTAP) are compositionally biased toward polar residues. Disordered regions lie at residues 236 to 283 (EWQQ…LLEE) and 295 to 353 (EAAA…SGFS). Residues 263–278 (SKNKRKKMRRKRKQQK) show a composition bias toward basic residues. Serine 329 is modified (phosphoserine). Low complexity predominate over residues 330–339 (PASSSPAPGG). The span at 344–353 (SPGSQTSGFS) shows a compositional bias: polar residues.

The protein belongs to the protein kinase superfamily. Highly expressed in skeletal muscle, heart, uterus and parorchis. Weakly expressed in brain, stomach, small intestine and ovary.

Its subcellular location is the nucleus. The protein localises to the cytoplasm. The catalysed reaction is L-seryl-[protein] + ATP = O-phospho-L-seryl-[protein] + ADP + H(+). It carries out the reaction L-threonyl-[protein] + ATP = O-phospho-L-threonyl-[protein] + ADP + H(+). Functionally, serine/arginine-rich protein-specific kinase which specifically phosphorylates its substrates at serine residues located in regions rich in arginine/serine dipeptides, known as RS domains. Phosphorylates the SR splicing factor SRSF1 and the lamin-B receptor (LBR) in vitro. Required for normal muscle development. This is SRSF protein kinase 3 (SRPK3) from Sus scrofa (Pig).